Consider the following 290-residue polypeptide: Flap endonuclease Xni (290 aa).

D125 contributes to the Mg(2+) binding site. A 5'-3' exonuclease domain is found at 181-275; it reads VKTSQLIDFW…DIRLTTSSSA (95 aa). Positions 192, 203, and 206 each coordinate K(+). The tract at residues 205 to 210 is interaction with DNA; sequence GIGQVT.

It belongs to the Xni family. Requires Mg(2+) as cofactor. It depends on K(+) as a cofactor.

Functionally, has flap endonuclease activity. During DNA replication, flap endonucleases cleave the 5'-overhanging flap structure that is generated by displacement synthesis when DNA polymerase encounters the 5'-end of a downstream Okazaki fragment. The protein is Flap endonuclease Xni of Colwellia psychrerythraea (strain 34H / ATCC BAA-681) (Vibrio psychroerythus).